The sequence spans 149 residues: Arginine regulator (149 aa).

Belongs to the ArgR family.

The protein localises to the cytoplasm. Its pathway is amino-acid degradation; L-arginine degradation via ADI pathway. Functionally, regulates the transcription of the arc operon, involved in arginine catabolism. This is Arginine regulator (argR1) from Bacillus cereus (strain ATCC 14579 / DSM 31 / CCUG 7414 / JCM 2152 / NBRC 15305 / NCIMB 9373 / NCTC 2599 / NRRL B-3711).